Reading from the N-terminus, the 250-residue chain is tRNA (guanine-N(1)-)-methyltransferase (250 aa).

Residues Gly116 and Ile136–Leu141 contribute to the S-adenosyl-L-methionine site.

It belongs to the RNA methyltransferase TrmD family. As to quaternary structure, homodimer.

The protein resides in the cytoplasm. It carries out the reaction guanosine(37) in tRNA + S-adenosyl-L-methionine = N(1)-methylguanosine(37) in tRNA + S-adenosyl-L-homocysteine + H(+). Specifically methylates guanosine-37 in various tRNAs. In Pseudomonas entomophila (strain L48), this protein is tRNA (guanine-N(1)-)-methyltransferase.